Consider the following 199-residue polypeptide: Protein P1 (199 aa).

The chain is Protein P1 from Rice tungro bacilliform virus (isolate Philippines) (RTBV).